The sequence spans 245 residues: 1-(5-phosphoribosyl)-5-[(5-phosphoribosylamino)methylideneamino] imidazole-4-carboxamide isomerase (245 aa).

D7 functions as the Proton acceptor in the catalytic mechanism. D129 serves as the catalytic Proton donor.

It belongs to the HisA/HisF family.

Its subcellular location is the cytoplasm. The enzyme catalyses 1-(5-phospho-beta-D-ribosyl)-5-[(5-phospho-beta-D-ribosylamino)methylideneamino]imidazole-4-carboxamide = 5-[(5-phospho-1-deoxy-D-ribulos-1-ylimino)methylamino]-1-(5-phospho-beta-D-ribosyl)imidazole-4-carboxamide. The protein operates within amino-acid biosynthesis; L-histidine biosynthesis; L-histidine from 5-phospho-alpha-D-ribose 1-diphosphate: step 4/9. The protein is 1-(5-phosphoribosyl)-5-[(5-phosphoribosylamino)methylideneamino] imidazole-4-carboxamide isomerase of Klebsiella pneumoniae subsp. pneumoniae (strain ATCC 700721 / MGH 78578).